A 102-amino-acid chain; its full sequence is Small ribosomal subunit protein uS10 (102 aa).

The tract at residues 34–59 is disordered; the sequence is QMSGPIPLPTKRLLVPTRKSPDGEGK.

Belongs to the universal ribosomal protein uS10 family. As to quaternary structure, part of the 30S ribosomal subunit.

In terms of biological role, involved in the binding of tRNA to the ribosomes. The chain is Small ribosomal subunit protein uS10 from Methanopyrus kandleri (strain AV19 / DSM 6324 / JCM 9639 / NBRC 100938).